A 1222-amino-acid polypeptide reads, in one-letter code: Serine/threonine-protein kinase WNK4 (1222 aa).

Residues 1 to 17 show a composition bias toward polar residues; that stretch reads MLAPRNTETGVHMSQTE. The disordered stretch occupies residues 1–163; it reads MLAPRNTETG…KEDTETQAVA (163 aa). Ser-95 carries the post-translational modification Phosphoserine. Positions 135 to 152 are enriched in basic and acidic residues; it reads EPPRVPDAAARERRREQE. Glycyl lysine isopeptide (Lys-Gly) (interchain with G-Cter in ubiquitin) cross-links involve residues Lys-154 and Lys-172. The Protein kinase domain maps to 171 to 429; it reads LKFDIEIGRG…IQDLLTHAFF (259 aa). Ser-181 lines the ATP pocket. Residues Lys-183, Lys-223, and Lys-238 each participate in a glycyl lysine isopeptide (Lys-Gly) (interchain with G-Cter in ubiquitin) cross-link. Residues 251 to 254 and Lys-301 each bind ATP; that span reads TELM. Asp-318 functions as the Proton acceptor in the catalytic mechanism. A Glycyl lysine isopeptide (Lys-Gly) (interchain with G-Cter in ubiquitin) cross-link involves residue Lys-325. Phosphoserine; by autocatalysis is present on residues Ser-328 and Ser-332. Glycyl lysine isopeptide (Lys-Gly) (interchain with G-Cter in ubiquitin) cross-links involve residues Lys-384, Lys-390, Lys-447, and Lys-451. The disordered stretch occupies residues 527-562; sequence LEVLPPDSGPPPATVSMTPGPPSAFPPEPEEPEADQ. The span at 533–553 shows a compositional bias: pro residues; it reads DSGPPPATVSMTPGPPSAFPP. An interaction with KLHL3 region spans residues 554–564; it reads EPEEPEADQHQ. Phosphoserine is present on Ser-572. Disordered regions lie at residues 591–612, 626–679, 747–809, 836–873, and 927–1087; these read FLDA…PAEP, RSGP…SVSD, DAGP…GTPF, QVSS…SPLP, and SPGL…QPSP. The segment covering 627–638 has biased composition (low complexity); sequence SGPGSDFSPGDS. A compositionally biased stretch (basic residues) spans 659–672; sequence NPVKTLRRRPRSRL. Low complexity-rich tracts occupy residues 792-809 and 845-873; these read FSTS…GTPF and APSS…SPLP. Pro residues predominate over residues 935–946; sequence PPAPPGPLPSMP. Over residues 953 to 963 the composition is skewed to polar residues; it reads DQESLSAQTAE. Lys-990 is covalently cross-linked (Glycyl lysine isopeptide (Lys-Gly) (interchain with G-Cter in ubiquitin)). Residues 996-999 carry the RFXV motif motif; sequence RFQV. The residue at position 1014 (Ser-1014) is a Phosphoserine. The span at 1044-1056 shows a compositional bias: basic and acidic residues; the sequence is ETREALAESDRAA. Over residues 1076–1086 the composition is skewed to polar residues; the sequence is GGSSPILSQPS. Residues Lys-1123, Lys-1136, and Lys-1137 each participate in a glycyl lysine isopeptide (Lys-Gly) (interchain with G-Cter in ubiquitin) cross-link. Residues 1169–1222 form a disordered region; the sequence is SKGSFPTSRRNSLQRSDLPGPGIMRRNSLSGSSTGSQEQRASKGVTFAGDVGRM. Composition is skewed to polar residues over residues 1172–1183 and 1195–1207; these read SFPTSRRNSLQR and NSLS…SQEQ. Ser-1196 is subject to Phosphoserine.

The protein belongs to the protein kinase superfamily. Ser/Thr protein kinase family. WNK subfamily. As to quaternary structure, interacts with the C-terminal region of KCNJ1. Interacts with WNK1 and WNK3. Interacts with KLHL3. It depends on Mg(2+) as a cofactor. In terms of processing, autophosphorylated at Ser-328 and Ser-332, promoting its activation. Phosphorylated by WNK1 and WNK3. Phosphorylated at Ser-572 in a MAP3K15/ASK3-dependent process in response to osmotic stress or hypotonic low-chloride stimulation. Ubiquitinated by the BCR(KLHL3) complex, leading to its degradation. Also ubiquitinated by the BCR(KLHL2) complex.

It localises to the cell junction. It is found in the tight junction. It carries out the reaction L-seryl-[protein] + ATP = O-phospho-L-seryl-[protein] + ADP + H(+). The enzyme catalyses L-threonyl-[protein] + ATP = O-phospho-L-threonyl-[protein] + ADP + H(+). Its activity is regulated as follows. Activation requires autophosphorylation of Ser-328 and Ser-332. Autophosphorylation and subsequent activation is inhibited by increases in intracellular ionic strength: Cl(-) potently inhibits WNK4 kinase activity via direct binding. Also inhibited by K(+) ions. In terms of biological role, serine/threonine-protein kinase component of the WNK4-SPAK/OSR1 kinase cascade, which acts as a key regulator of ion transport in the distal nephron and blood pressure. The WNK4-SPAK/OSR1 kinase cascade is composed of WNK4, which mediates phosphorylation and activation of downstream kinases OXSR1/OSR1 and STK39/SPAK. Following activation, OXSR1/OSR1 and STK39/SPAK catalyze phosphorylation of ion cotransporters, such as SLC12A1/NKCC2, SLC12A2/NKCC1, SLC12A3/NCC, SLC12A5/KCC2 or SLC12A6/KCC3, regulating their activity. Acts as a molecular switch that regulates the balance between renal salt reabsorption and K(+) secretion by modulating the activities of renal transporters and channels, including the Na-Cl cotransporter SLC12A3/NCC and the K(+) channel, KCNJ1/ROMK. Regulates NaCl reabsorption in the distal nephron by activating the thiazide-sensitive Na-Cl cotransporter SLC12A3/NCC in distal convoluted tubule cells of kidney: activates SLC12A3/NCC in a OXSR1/OSR1- and STK39/SPAK-dependent process. Also acts as a scaffold protein independently of its protein kinase activity: negatively regulates cell membrane localization of various transporters and channels (CFTR, KCNJ1/ROMK, SLC4A4, SLC26A9 and TRPV4) by clathrin-dependent endocytosis. Also inhibits the activity of the epithelial Na(+) channel (ENaC) SCNN1A, SCNN1B, SCNN1D in a inase-independent mechanism. May also phosphorylate NEDD4L. This is Serine/threonine-protein kinase WNK4 from Rattus norvegicus (Rat).